Here is a 445-residue protein sequence, read N- to C-terminus: Exodeoxyribonuclease 7 large subunit (445 aa).

This sequence belongs to the XseA family. As to quaternary structure, heterooligomer composed of large and small subunits.

The protein localises to the cytoplasm. The catalysed reaction is Exonucleolytic cleavage in either 5'- to 3'- or 3'- to 5'-direction to yield nucleoside 5'-phosphates.. In terms of biological role, bidirectionally degrades single-stranded DNA into large acid-insoluble oligonucleotides, which are then degraded further into small acid-soluble oligonucleotides. The protein is Exodeoxyribonuclease 7 large subunit of Staphylococcus aureus (strain JH1).